A 449-amino-acid polypeptide reads, in one-letter code: Cryptochrome DASH (449 aa).

The 133-residue stretch at 15-147 (RLGLFVFRND…PFHETPNNTL (133 aa)) folds into the Photolyase/cryptochrome alpha/beta domain.

The protein belongs to the DNA photolyase class-1 family. FAD is required as a cofactor. The cofactor is (6R)-5,10-methylene-5,6,7,8-tetrahydrofolate.

In terms of biological role, may have a photoreceptor function. Binds DNA; probably functions as a transcriptional repressor. The chain is Cryptochrome DASH (cry) from Idiomarina loihiensis (strain ATCC BAA-735 / DSM 15497 / L2-TR).